The following is a 477-amino-acid chain: uncharacterized protein (477 aa).

This is an uncharacterized protein from Aquifex aeolicus (strain VF5).